The sequence spans 231 residues: Ribose-5-phosphate isomerase A (231 aa).

Substrate contacts are provided by residues 31–34 (SGST), 87–90 (DGAD), and 100–103 (KGGG). Residue E109 is the Proton acceptor of the active site. Residue K127 coordinates substrate.

It belongs to the ribose 5-phosphate isomerase family. In terms of assembly, homodimer.

The enzyme catalyses aldehydo-D-ribose 5-phosphate = D-ribulose 5-phosphate. It functions in the pathway carbohydrate degradation; pentose phosphate pathway; D-ribose 5-phosphate from D-ribulose 5-phosphate (non-oxidative stage): step 1/1. In terms of biological role, catalyzes the reversible conversion of ribose-5-phosphate to ribulose 5-phosphate. The polypeptide is Ribose-5-phosphate isomerase A (Chlamydia pneumoniae (Chlamydophila pneumoniae)).